The chain runs to 292 residues: Ribosomal protein L11 methyltransferase (292 aa).

S-adenosyl-L-methionine contacts are provided by Thr-144, Gly-165, Asp-187, and Asn-229.

Belongs to the methyltransferase superfamily. PrmA family.

It localises to the cytoplasm. The enzyme catalyses L-lysyl-[protein] + 3 S-adenosyl-L-methionine = N(6),N(6),N(6)-trimethyl-L-lysyl-[protein] + 3 S-adenosyl-L-homocysteine + 3 H(+). Methylates ribosomal protein L11. This Azotobacter vinelandii (strain DJ / ATCC BAA-1303) protein is Ribosomal protein L11 methyltransferase.